The primary structure comprises 342 residues: N-acetyl-gamma-glutamyl-phosphate reductase (342 aa).

The active site involves C146.

The protein belongs to the NAGSA dehydrogenase family. Type 1 subfamily.

The protein localises to the cytoplasm. The enzyme catalyses N-acetyl-L-glutamate 5-semialdehyde + phosphate + NADP(+) = N-acetyl-L-glutamyl 5-phosphate + NADPH + H(+). Its pathway is amino-acid biosynthesis; L-arginine biosynthesis; N(2)-acetyl-L-ornithine from L-glutamate: step 3/4. Catalyzes the NADPH-dependent reduction of N-acetyl-5-glutamyl phosphate to yield N-acetyl-L-glutamate 5-semialdehyde. This is N-acetyl-gamma-glutamyl-phosphate reductase from Saccharopolyspora erythraea (strain ATCC 11635 / DSM 40517 / JCM 4748 / NBRC 13426 / NCIMB 8594 / NRRL 2338).